The primary structure comprises 193 residues: MVEKSIVQEAKDIHLAMELITLGARLQMLESETQLSRGRLIKLYKELRGSPPPKGMLPFSTDWFMTWEQNIHSSMFYNAYSFLLKSGQCTGVEAVIKAYRLYLEQCPDQSGIPPLLALTRAWTLVRFVDSGMLQLSGCNCCGGTFITHAHQPRNSFVCSLCQPPSRAVKKRKLSPQSADITSQLLDEQVRRAV.

4 residues coordinate Zn(2+): Cys138, Cys141, Cys158, and Cys161.

This sequence belongs to the FlhC family. In terms of assembly, heterohexamer composed of two FlhC and four FlhD subunits. Each FlhC binds a FlhD dimer, forming a heterotrimer, and a hexamer assembles by dimerization of two heterotrimers. It depends on Zn(2+) as a cofactor.

The protein resides in the cytoplasm. In terms of biological role, functions in complex with FlhD as a master transcriptional regulator that regulates transcription of several flagellar and non-flagellar operons by binding to their promoter region. Activates expression of class 2 flagellar genes, including fliA, which is a flagellum-specific sigma factor that turns on the class 3 genes. Also regulates genes whose products function in a variety of physiological pathways. The protein is Flagellar transcriptional regulator FlhC of Yersinia enterocolitica.